A 329-amino-acid polypeptide reads, in one-letter code: Nitrogenase iron-iron protein beta chain (329 aa).

[8Fe-7S] cluster contacts are provided by Cys20, Cys45, Cys104, and Ser143. Residues 213-288 are disordered; that stretch reads SADGSLVSHG…EEGDGKPIPQ (76 aa). The segment covering 257–271 has biased composition (basic residues); it reads RSRRSSARPRSHPQY.

It belongs to the NifD/NifK/NifE/NifN family. Hexamer of two alpha, two beta, and two delta chains. The cofactor is [8Fe-7S] cluster.

The catalysed reaction is N2 + 8 reduced [2Fe-2S]-[ferredoxin] + 16 ATP + 16 H2O = H2 + 8 oxidized [2Fe-2S]-[ferredoxin] + 2 NH4(+) + 16 ADP + 16 phosphate + 6 H(+). Functionally, this iron-iron protein is part of the nitrogenase complex that catalyzes the key enzymatic reactions in nitrogen fixation. Other nitrogenase complexes utilize a molybdenum-iron protein or a vanadium-iron protein. The chain is Nitrogenase iron-iron protein beta chain (anfK) from Ruminiclostridium hungatei (Clostridium hungatei).